Consider the following 192-residue polypeptide: MNITSADFFCSYSSLNGLPSDGRPEIVFVGRSNVGKSSLLNSLCARKGLAKTSSTPGKTRLINYFLINENLYFVDLPGYGYAKVGHGERESWGKLLTDYVVKRDEIALVVLLVDARHPGMGSDREMMEFLDYCGRPFGIVLTKWDKLKQAEKSKARRTIESCASNARFIVNYSSLSGAGRDKLLERLDLFSQ.

The EngB-type G domain occupies 22–192; that stretch reads GRPEIVFVGR…LLERLDLFSQ (171 aa). GTP contacts are provided by residues 30–37, 57–61, 75–78, 142–145, and 172–174; these read GRSNVGKS, GKTRL, DLPG, TKWD, and YSS. Mg(2+) is bound by residues Ser-37 and Thr-59.

It belongs to the TRAFAC class TrmE-Era-EngA-EngB-Septin-like GTPase superfamily. EngB GTPase family. Requires Mg(2+) as cofactor.

In terms of biological role, necessary for normal cell division and for the maintenance of normal septation. This chain is Probable GTP-binding protein EngB, found in Chlorobaculum parvum (strain DSM 263 / NCIMB 8327) (Chlorobium vibrioforme subsp. thiosulfatophilum).